The following is a 398-amino-acid chain: Glutamyl-tRNA reductase (398 aa).

Substrate is bound by residues 45–48 (TCNR), Ser88, 93–95 (EDQ), and Gln99. Cys46 functions as the Nucleophile in the catalytic mechanism. Residue 168–173 (GAGKMG) coordinates NADP(+).

It belongs to the glutamyl-tRNA reductase family. In terms of assembly, homodimer.

It catalyses the reaction (S)-4-amino-5-oxopentanoate + tRNA(Glu) + NADP(+) = L-glutamyl-tRNA(Glu) + NADPH + H(+). Its pathway is porphyrin-containing compound metabolism; protoporphyrin-IX biosynthesis; 5-aminolevulinate from L-glutamyl-tRNA(Glu): step 1/2. In terms of biological role, catalyzes the NADPH-dependent reduction of glutamyl-tRNA(Glu) to glutamate 1-semialdehyde (GSA). The protein is Glutamyl-tRNA reductase (hemA) of Methanothermobacter marburgensis (strain ATCC BAA-927 / DSM 2133 / JCM 14651 / NBRC 100331 / OCM 82 / Marburg) (Methanobacterium thermoautotrophicum).